The chain runs to 184 residues: Ribosome maturation factor RimP (184 aa).

Belongs to the RimP family.

The protein resides in the cytoplasm. Required for maturation of 30S ribosomal subunits. The chain is Ribosome maturation factor RimP from Corynebacterium diphtheriae (strain ATCC 700971 / NCTC 13129 / Biotype gravis).